A 665-amino-acid polypeptide reads, in one-letter code: DNA ligase (665 aa).

Residues 34–38, 83–84, and glutamate 114 contribute to the NAD(+) site; these read DEEYD and SL. Lysine 116 functions as the N6-AMP-lysine intermediate in the catalytic mechanism. Positions 137, 171, 287, and 311 each coordinate NAD(+). Zn(2+)-binding residues include cysteine 405, cysteine 408, cysteine 424, and cysteine 429. A BRCT domain is found at 587 to 665; that stretch reads KKSSKLAGLT…EDEFKKMIID (79 aa).

Belongs to the NAD-dependent DNA ligase family. LigA subfamily. It depends on Mg(2+) as a cofactor. Requires Mn(2+) as cofactor.

It carries out the reaction NAD(+) + (deoxyribonucleotide)n-3'-hydroxyl + 5'-phospho-(deoxyribonucleotide)m = (deoxyribonucleotide)n+m + AMP + beta-nicotinamide D-nucleotide.. DNA ligase that catalyzes the formation of phosphodiester linkages between 5'-phosphoryl and 3'-hydroxyl groups in double-stranded DNA using NAD as a coenzyme and as the energy source for the reaction. It is essential for DNA replication and repair of damaged DNA. This is DNA ligase from Thermosipho africanus (strain TCF52B).